We begin with the raw amino-acid sequence, 184 residues long: Peptide deformylase 2 (184 aa).

The Fe cation site is built by cysteine 110 and histidine 153. Glutamate 154 is a catalytic residue. Histidine 157 is a Fe cation binding site.

It belongs to the polypeptide deformylase family. Fe(2+) is required as a cofactor.

It carries out the reaction N-terminal N-formyl-L-methionyl-[peptide] + H2O = N-terminal L-methionyl-[peptide] + formate. Removes the formyl group from the N-terminal Met of newly synthesized proteins. Requires at least a dipeptide for an efficient rate of reaction. N-terminal L-methionine is a prerequisite for activity but the enzyme has broad specificity at other positions. The chain is Peptide deformylase 2 from Geobacillus stearothermophilus (Bacillus stearothermophilus).